The following is a 343-amino-acid chain: Glycerol-3-phosphate dehydrogenase [NAD(P)+] (343 aa).

NADPH is bound by residues serine 11, tryptophan 12, histidine 32, arginine 33, and lysine 106. 3 residues coordinate sn-glycerol 3-phosphate: lysine 106, glycine 136, and serine 138. Alanine 140 is an NADPH binding site. The sn-glycerol 3-phosphate site is built by lysine 192, aspartate 245, serine 255, arginine 256, and asparagine 257. Lysine 192 acts as the Proton acceptor in catalysis. Arginine 256 contributes to the NADPH binding site. 2 residues coordinate NADPH: valine 280 and glutamate 282.

Belongs to the NAD-dependent glycerol-3-phosphate dehydrogenase family.

It is found in the cytoplasm. It catalyses the reaction sn-glycerol 3-phosphate + NAD(+) = dihydroxyacetone phosphate + NADH + H(+). The enzyme catalyses sn-glycerol 3-phosphate + NADP(+) = dihydroxyacetone phosphate + NADPH + H(+). Its pathway is membrane lipid metabolism; glycerophospholipid metabolism. Its function is as follows. Catalyzes the reduction of the glycolytic intermediate dihydroxyacetone phosphate (DHAP) to sn-glycerol 3-phosphate (G3P), the key precursor for phospholipid synthesis. This Geobacillus thermodenitrificans (strain NG80-2) protein is Glycerol-3-phosphate dehydrogenase [NAD(P)+].